A 61-amino-acid chain; its full sequence is Small ribosomal subunit protein uS14B (61 aa).

Positions 24, 27, 40, and 43 each coordinate Zn(2+).

It belongs to the universal ribosomal protein uS14 family. Zinc-binding uS14 subfamily. In terms of assembly, part of the 30S ribosomal subunit. Contacts proteins S3 and S10. Zn(2+) is required as a cofactor.

Binds 16S rRNA, required for the assembly of 30S particles and may also be responsible for determining the conformation of the 16S rRNA at the A site. The polypeptide is Small ribosomal subunit protein uS14B (Ligilactobacillus salivarius (strain UCC118) (Lactobacillus salivarius)).